Consider the following 244-residue polypeptide: 3-oxoacyl-[acyl-carrier-protein] reductase FabG (244 aa).

NADP(+) is bound by residues 12–15, Thr37, 59–60, and Asn86; these read GASR and NV. Residue Ser138 participates in substrate binding. Tyr151 functions as the Proton acceptor in the catalytic mechanism. NADP(+) contacts are provided by residues 151-155 and Ile184; that span reads YAAAK.

This sequence belongs to the short-chain dehydrogenases/reductases (SDR) family. As to quaternary structure, homotetramer.

It catalyses the reaction a (3R)-hydroxyacyl-[ACP] + NADP(+) = a 3-oxoacyl-[ACP] + NADPH + H(+). It participates in lipid metabolism; fatty acid biosynthesis. Its function is as follows. Catalyzes the NADPH-dependent reduction of beta-ketoacyl-ACP substrates to beta-hydroxyacyl-ACP products, the first reductive step in the elongation cycle of fatty acid biosynthesis. This is 3-oxoacyl-[acyl-carrier-protein] reductase FabG (fabG) from Vibrio harveyi (Beneckea harveyi).